A 424-amino-acid polypeptide reads, in one-letter code: MTESASCHGGGVCGGLAQEEGQRQVFCGLTSIVWLHRKMRDAFFLVVGSRTCAHLLQSAAGVMIFAEPRFATAVLGERDLAGMADCNEELDRVVHELLARRPEIRTLFLVGSCPSEVIKLDLGKAAERLTAAHEGRVRVLPYSGSGLETTFTQGEDQFLTTLAHELPASPEGAPSLIVLGTLADVVEDQFRRLFDQLGIGPVHFLPPRTGADLPPVGPGTRVLQAQPFTGEATRALIRRGAERLDAPYPLGVEGTRSWLQAATRSFGVPDEQLEAVIEAPIARAQAALERQRGVLSGKRITFLPDSQLELPLARFLSEECGMQPVEVATPYFDREFHGRERDALGEEVRLVEGQDVDAQLDRLRADRPDLTVCGLGLANPLEAEGLRTKWSIELVFSPIQGFEQAGDLAELFARPLVRHETLKV.

[4Fe-4S] cluster contacts are provided by Cys27, Cys52, and Cys113.

This sequence belongs to the BchN/ChlN family. As to quaternary structure, protochlorophyllide reductase is composed of three subunits; BchL, BchN and BchB. Forms a heterotetramer of two BchB and two BchN subunits. It depends on [4Fe-4S] cluster as a cofactor.

It catalyses the reaction chlorophyllide a + oxidized 2[4Fe-4S]-[ferredoxin] + 2 ADP + 2 phosphate = protochlorophyllide a + reduced 2[4Fe-4S]-[ferredoxin] + 2 ATP + 2 H2O. The protein operates within porphyrin-containing compound metabolism; bacteriochlorophyll biosynthesis (light-independent). Its function is as follows. Component of the dark-operative protochlorophyllide reductase (DPOR) that uses Mg-ATP and reduced ferredoxin to reduce ring D of protochlorophyllide (Pchlide) to form chlorophyllide a (Chlide). This reaction is light-independent. The NB-protein (BchN-BchB) is the catalytic component of the complex. The protein is Light-independent protochlorophyllide reductase subunit N of Halorhodospira halophila (strain DSM 244 / SL1) (Ectothiorhodospira halophila (strain DSM 244 / SL1)).